The chain runs to 729 residues: Glutamine synthetase (729 aa).

The region spanning 85-174 is the GS beta-grasp domain; it reads THYTHWFQPL…IPTIFISYTG (90 aa). The GS catalytic domain occupies 179 to 615; that stretch reads YKTPLLKALA…VLGDLAINHI (437 aa). Glu215, Glu217, Glu286, and Glu293 together coordinate Mg(2+). L-glutamate contacts are provided by residues 337 to 338 and Gly338; that span reads NG. His342 contributes to the Mg(2+) binding site. Residues Ser346 and Arg458 each coordinate ATP. Arg458 is a binding site for L-glutamate.

It belongs to the glutamine synthetase family. In terms of assembly, homohexamer. Mg(2+) is required as a cofactor.

Its subcellular location is the cytoplasm. The enzyme catalyses L-glutamate + NH4(+) + ATP = L-glutamine + ADP + phosphate + H(+). Inhibited by L-histidine (46%), L-arginine (38%) and L-methionine-DL-sulphoximine. The activity of this enzyme is not controlled by adenylation. Its function is as follows. Catalyzes the ATP-dependent biosynthesis of glutamine from glutamate and ammonia. The sequence is that of Glutamine synthetase from Bacteroides fragilis (strain YCH46).